The sequence spans 37 residues: Cytochrome b6-f complex subunit 5 (37 aa).

Residues 5–25 (LLCGIVLGLIPITLMGLFVAA) traverse the membrane as a helical segment.

The protein belongs to the PetG family. The 4 large subunits of the cytochrome b6-f complex are cytochrome b6, subunit IV (17 kDa polypeptide, PetD), cytochrome f and the Rieske protein, while the 4 small subunits are PetG, PetL, PetM and PetN. The complex functions as a dimer.

The protein localises to the cellular thylakoid membrane. Component of the cytochrome b6-f complex, which mediates electron transfer between photosystem II (PSII) and photosystem I (PSI), cyclic electron flow around PSI, and state transitions. PetG is required for either the stability or assembly of the cytochrome b6-f complex. This is Cytochrome b6-f complex subunit 5 from Synechococcus sp. (strain CC9311).